A 570-amino-acid polypeptide reads, in one-letter code: Conserved oligomeric Golgi complex subunit 8 (570 aa).

Belongs to the COG8 family. As to quaternary structure, component of the conserved oligomeric Golgi complex which is composed of eight different subunits and is required for normal Golgi morphology and localization.

The protein localises to the golgi apparatus membrane. Its function is as follows. Required for normal Golgi function. The chain is Conserved oligomeric Golgi complex subunit 8 from Drosophila melanogaster (Fruit fly).